The sequence spans 142 residues: MQHARKKFRVGRTSSHNRCMLANMLKSLIHNERIETTLPKAKELRRHADKMVTLAKKNTLAARRLAVGRLMVRYNTLTGKEARQVKAGDLSAYNVDRRVIGKLFDVLATRFSSRNGGYTRILKLQNRVGDNAQKCIIEFLAD.

It belongs to the bacterial ribosomal protein bL17 family. In terms of assembly, part of the 50S ribosomal subunit. Contacts protein L32.

This is Large ribosomal subunit protein bL17 from Chlamydia muridarum (strain MoPn / Nigg).